The primary structure comprises 198 residues: Recombination protein RecR (198 aa).

A C4-type zinc finger spans residues 57–72 (CSICGNLTDDDPCHIC). In terms of domain architecture, Toprim spans 80-175 (TTILVVEDAK…KVTRLARGLA (96 aa)).

Belongs to the RecR family.

In terms of biological role, may play a role in DNA repair. It seems to be involved in an RecBC-independent recombinational process of DNA repair. It may act with RecF and RecO. The sequence is that of Recombination protein RecR from Streptococcus pyogenes serotype M1.